The sequence spans 336 residues: Holliday junction branch migration complex subunit RuvB (336 aa).

Positions 1 to 182 (MAKRMITTEL…FGVVHRLEFY (182 aa)) are large ATPase domain (RuvB-L). Residues Leu21, Arg22, Gly63, Lys66, Thr67, Thr68, 129 to 131 (EDY), Arg172, Tyr182, and Arg219 contribute to the ATP site. Thr67 serves as a coordination point for Mg(2+). The interval 183-253 (TTEELKEIIT…VARFALDILE (71 aa)) is small ATPAse domain (RuvB-S). A head domain (RuvB-H) region spans residues 256–336 (KLGLDHIDRQ…GLPYENKELS (81 aa)). 2 residues coordinate DNA: Arg311 and Arg316.

The protein belongs to the RuvB family. As to quaternary structure, homohexamer. Forms an RuvA(8)-RuvB(12)-Holliday junction (HJ) complex. HJ DNA is sandwiched between 2 RuvA tetramers; dsDNA enters through RuvA and exits via RuvB. An RuvB hexamer assembles on each DNA strand where it exits the tetramer. Each RuvB hexamer is contacted by two RuvA subunits (via domain III) on 2 adjacent RuvB subunits; this complex drives branch migration. In the full resolvosome a probable DNA-RuvA(4)-RuvB(12)-RuvC(2) complex forms which resolves the HJ.

The protein localises to the cytoplasm. It carries out the reaction ATP + H2O = ADP + phosphate + H(+). Functionally, the RuvA-RuvB-RuvC complex processes Holliday junction (HJ) DNA during genetic recombination and DNA repair, while the RuvA-RuvB complex plays an important role in the rescue of blocked DNA replication forks via replication fork reversal (RFR). RuvA specifically binds to HJ cruciform DNA, conferring on it an open structure. The RuvB hexamer acts as an ATP-dependent pump, pulling dsDNA into and through the RuvAB complex. RuvB forms 2 homohexamers on either side of HJ DNA bound by 1 or 2 RuvA tetramers; 4 subunits per hexamer contact DNA at a time. Coordinated motions by a converter formed by DNA-disengaged RuvB subunits stimulates ATP hydrolysis and nucleotide exchange. Immobilization of the converter enables RuvB to convert the ATP-contained energy into a lever motion, pulling 2 nucleotides of DNA out of the RuvA tetramer per ATP hydrolyzed, thus driving DNA branch migration. The RuvB motors rotate together with the DNA substrate, which together with the progressing nucleotide cycle form the mechanistic basis for DNA recombination by continuous HJ branch migration. Branch migration allows RuvC to scan DNA until it finds its consensus sequence, where it cleaves and resolves cruciform DNA. The chain is Holliday junction branch migration complex subunit RuvB from Lachnoclostridium phytofermentans (strain ATCC 700394 / DSM 18823 / ISDg) (Clostridium phytofermentans).